The sequence spans 496 residues: Deoxyribodipyrimidine photo-lyase (496 aa).

In terms of domain architecture, Photolyase/cryptochrome alpha/beta spans 28–160 (GPVVYWMFRD…EVDAHNVVPM (133 aa)). Residues Y256, 269 to 273 (LSGLS), 307 to 315 (ELIVRRELS), and 415 to 417 (DGR) each bind FAD. A DNA-binding site is contributed by E307.

It belongs to the DNA photolyase class-2 family. It depends on FAD as a cofactor. In terms of tissue distribution, highly expressed in flowers. Expressed in roots and stems.

It localises to the nucleus. The enzyme catalyses cyclobutadipyrimidine (in DNA) = 2 pyrimidine residues (in DNA).. Its function is as follows. Involved in repair of UV radiation-induced DNA damage. Catalyzes the light-dependent monomerization (300-600 nm) of cyclobutylpyrimidine dimers (CPDs), which are formed between adjacent bases on the same DNA strand upon exposure to ultraviolet radiation. Required for plant survival in the presence of UV-B light. Not involved in the repair of (6-4) photoproducts. The sequence is that of Deoxyribodipyrimidine photo-lyase (PHR1) from Arabidopsis thaliana (Mouse-ear cress).